The following is a 72-amino-acid chain: MSAIFNFQSLLTVILLLICTCAYIRSLAPSLLDKNKSGLLGIFWKCARIGERKSPYVAVCCVVMAFSILFMQ.

Positions 1 to 26 (MSAIFNFQSLLTVILLLICTCAYIRS) are cleaved as a signal peptide. Residues 27 to 53 (LAPSLLDKNKSGLLGIFWKCARIGERK) lie on the Extracellular side of the membrane. An N-linked (GlcNAc...) asparagine glycan is attached at Asn35. The helical transmembrane segment at 54–71 (SPYVAVCCVVMAFSILFM) threads the bilayer. Residue Gln72 is a topological domain, cytoplasmic.

Belongs to the KISH family.

Its subcellular location is the golgi apparatus membrane. Involved in the early part of the secretory pathway. The polypeptide is Protein kish-A (TMEM167A) (Taeniopygia guttata (Zebra finch)).